A 237-amino-acid polypeptide reads, in one-letter code: RNA polymerase sigma-28 factor (237 aa).

The propeptide occupies 1 to 19; it reads MSLFAAIGYMVREVFVFVS. A Polymerase core binding motif is present at residues 77-90; that stretch reads DLISIGTIGLIKAI. A DNA-binding region (H-T-H motif) is located at residues 197–206; sequence QREIAKALGI.

Belongs to the sigma-70 factor family. In terms of processing, proteolytically cleaved in the N-terminus probably by a SpoIIGA homolog to yield the active peptide.

Its function is as follows. Sigma factors are initiation factors that promote the attachment of RNA polymerase to specific initiation sites and are then released. This sigma factor directs the transcription of crystal protein genes, a sporulation-regulated event. This is RNA polymerase sigma-28 factor (sigK) from Bacillus thuringiensis subsp. kurstaki.